The primary structure comprises 154 residues: MIYTIEVQLDEGITADSELVERAAAAVLAAEQMPEGCEVGIRITTDDELHRLNRDFRGVDAPTDVLSFADDGHDSRFVVAPDQPRYLGDIAISYQRVLAQAAEYGHSPARELAYLTVHGVLHLLGYDHEQGPAEAARMRTREEEIMTILGLPRE.

Histidine 118, histidine 122, and histidine 128 together coordinate Zn(2+).

It belongs to the endoribonuclease YbeY family. Requires Zn(2+) as cofactor.

The protein resides in the cytoplasm. Functionally, single strand-specific metallo-endoribonuclease involved in late-stage 70S ribosome quality control and in maturation of the 3' terminus of the 16S rRNA. In Chloroflexus aurantiacus (strain ATCC 29366 / DSM 635 / J-10-fl), this protein is Endoribonuclease YbeY.